Here is a 176-residue protein sequence, read N- to C-terminus: 3-hydroxydecanoyl-[acyl-carrier-protein] dehydratase (176 aa).

The active site involves H70.

This sequence belongs to the thioester dehydratase family. FabA subfamily. In terms of assembly, homodimer.

The protein resides in the cytoplasm. It catalyses the reaction a (3R)-hydroxyacyl-[ACP] = a (2E)-enoyl-[ACP] + H2O. The catalysed reaction is (3R)-hydroxydecanoyl-[ACP] = (2E)-decenoyl-[ACP] + H2O. The enzyme catalyses (2E)-decenoyl-[ACP] = (3Z)-decenoyl-[ACP]. It participates in lipid metabolism; fatty acid biosynthesis. Its function is as follows. Necessary for the introduction of cis unsaturation into fatty acids. Catalyzes the dehydration of (3R)-3-hydroxydecanoyl-ACP to E-(2)-decenoyl-ACP and then its isomerization to Z-(3)-decenoyl-ACP. Can catalyze the dehydratase reaction for beta-hydroxyacyl-ACPs with saturated chain lengths up to 16:0, being most active on intermediate chain length. The sequence is that of 3-hydroxydecanoyl-[acyl-carrier-protein] dehydratase from Alkalilimnicola ehrlichii (strain ATCC BAA-1101 / DSM 17681 / MLHE-1).